A 75-amino-acid chain; its full sequence is Large ribosomal subunit protein uL24c (75 aa).

The protein belongs to the universal ribosomal protein uL24 family. As to quaternary structure, part of the 50S ribosomal subunit.

The protein resides in the plastid. Its subcellular location is the chloroplast. In terms of biological role, one of two assembly initiator proteins, it binds directly to the 5'-end of the 23S rRNA, where it nucleates assembly of the 50S subunit. The sequence is that of Large ribosomal subunit protein uL24c (rpl24) from Cyanidioschyzon merolae (strain NIES-3377 / 10D) (Unicellular red alga).